Here is a 108-residue protein sequence, read N- to C-terminus: Large ribosomal subunit protein P2A (108 aa).

Residues Leu62–Asp108 form a disordered region. Low complexity predominate over residues Gly68 to Glu84. A compositionally biased stretch (acidic residues) spans Ala85–Met102. At Ser98 the chain carries Phosphoserine.

It belongs to the eukaryotic ribosomal protein P1/P2 family.

Functionally, plays an important role in the elongation step of protein synthesis. The chain is Large ribosomal subunit protein P2A (RPP2A) from Candida albicans (Yeast).